The following is a 406-amino-acid chain: High mobility group nucleosome-binding domain-containing protein 5 (406 aa).

Residues 1–406 (MPKRKAAGDV…GEKEEPLSIV (406 aa)) form a disordered region. A Phosphothreonine modification is found at threonine 29. The span at 35-44 (KRASTSRKTK) shows a compositional bias: basic residues. Composition is skewed to basic and acidic residues over residues 63-72 (TKPEDVKDEC), 92-101 (MEAEEVKEQI), 110-126 (GEKK…DELK), 136-159 (EDGK…EGLN), and 166-187 (KSED…KGED). A Glycyl lysine isopeptide (Lys-Gly) (interchain with G-Cter in SUMO2) cross-link involves residue lysine 64. Residue lysine 98 forms a Glycyl lysine isopeptide (Lys-Gly) (interchain with G-Cter in SUMO1); alternate linkage. Lysine 98 is covalently cross-linked (Glycyl lysine isopeptide (Lys-Gly) (interchain with G-Cter in SUMO2); alternate). Residue lysine 121 forms a Glycyl lysine isopeptide (Lys-Gly) (interchain with G-Cter in SUMO2) linkage. The span at 188-200 (GKEEGDEKEEEKD) shows a compositional bias: acidic residues. Composition is skewed to basic and acidic residues over residues 201–239 (DKEG…KEGQ), 246–266 (EDLH…KEGQ), 272–284 (KEIH…KEGQ), and 290–311 (KEYL…KEGQ). The span at 312–325 (PEEDGKEDQPEEDG) shows a compositional bias: acidic residues. Basic and acidic residues predominate over residues 326-365 (KEGQCKEDGKEGHHEEGGKEDLHEEDGKEKDGGKEDRKEE). A compositionally biased stretch (acidic residues) spans 366-376 (GEQEVAVDEGS). Residues 377–406 (DENKVEAEEEGAENKDFKQDGEKEEPLSIV) are compositionally biased toward basic and acidic residues.

The protein belongs to the HMGN family. In terms of tissue distribution, expressed in liver, spleen, lung, heart, kidney, muscle and brain (at protein level). Widely expressed with highest levels in submaxillary gland, thymus, kidney and liver and lowest levels in brain, lung, pancreas and eye.

It localises to the nucleus. Its function is as follows. Preferentially binds to euchromatin and modulates cellular transcription by counteracting linker histone-mediated chromatin compaction. This is High mobility group nucleosome-binding domain-containing protein 5 (Hmgn5) from Mus musculus (Mouse).